The sequence spans 352 residues: Putative [LysW]-L-2-aminoadipate/[LysW]-L-glutamate phosphate reductase (352 aa).

NADP(+)-binding positions include 10 to 13 and 34 to 36; these read SGFT and SRK. The active site involves Cys-151. Residue Asn-319 coordinates NADP(+).

The protein belongs to the NAGSA dehydrogenase family. Type 1 subfamily. LysY sub-subfamily.

It localises to the cytoplasm. It carries out the reaction [amino-group carrier protein]-C-terminal-N-(1-carboxy-5-oxopentan-1-yl)-L-glutamine + phosphate + NADP(+) = [amino-group carrier protein]-C-terminal-N-(1-carboxy-5-phosphooxy-5-oxopentan-1-yl)-L-glutamine + NADPH + H(+). The enzyme catalyses [amino-group carrier protein]-C-terminal-gamma-(L-glutamyl-5-semialdehyde)-L-glutamate + phosphate + NADP(+) = [amino-group carrier protein]-C-terminal-gamma-(5-phospho-L-glutamyl)-L-glutamate + NADPH + H(+). It functions in the pathway amino-acid biosynthesis; L-lysine biosynthesis via AAA pathway; L-lysine from L-alpha-aminoadipate (Thermus route): step 3/5. Its pathway is amino-acid biosynthesis; L-arginine biosynthesis. Functionally, involved in both the arginine and lysine biosynthetic pathways. This chain is Putative [LysW]-L-2-aminoadipate/[LysW]-L-glutamate phosphate reductase, found in Pyrobaculum neutrophilum (strain DSM 2338 / JCM 9278 / NBRC 100436 / V24Sta) (Thermoproteus neutrophilus).